The following is a 78-amino-acid chain: Large ribosomal subunit protein bL28 (78 aa).

The disordered stretch occupies residues 1 to 25 (MARVCQVTGKRPMSGHHVSHANNKT). A compositionally biased stretch (basic residues) spans 13–25 (MSGHHVSHANNKT).

The protein belongs to the bacterial ribosomal protein bL28 family.

The chain is Large ribosomal subunit protein bL28 from Nitrosomonas eutropha (strain DSM 101675 / C91 / Nm57).